A 341-amino-acid chain; its full sequence is MAAARGAMPTAPSYWRSRGPRALLLYPLSLLFGLLAALRRRLYRAGLLSQVRLPVKVIVVGNIAVGGSGKTPVVAWLVEQLRAAGWHPGIISRGHGGSARGVLEVVASGDAGVCGDEPLLLARLTGVPVFVGRDRPAAAAALLQAHPECDVIVSDDGMQHYRLARDLELAVVDPATLGNRWLLPAGPLREPVGRLDRVDLVIRHGDEGELPPRLGARAVPMRLVGDGFRGVADPARRCEASAFRGRRVHAVAGIGRPQRFFDQLAAMGLDVVPHPFPDHHRFVAADLDFAPGEPKLMTSKDAVKCAPFAPADAWEFPVTAEIGSGAAERILERLQHGRPPA.

Residue 64–71 (AVGGSGKT) coordinates ATP.

Belongs to the LpxK family.

It carries out the reaction a lipid A disaccharide + ATP = a lipid IVA + ADP + H(+). It participates in glycolipid biosynthesis; lipid IV(A) biosynthesis; lipid IV(A) from (3R)-3-hydroxytetradecanoyl-[acyl-carrier-protein] and UDP-N-acetyl-alpha-D-glucosamine: step 6/6. Its function is as follows. Transfers the gamma-phosphate of ATP to the 4'-position of a tetraacyldisaccharide 1-phosphate intermediate (termed DS-1-P) to form tetraacyldisaccharide 1,4'-bis-phosphate (lipid IVA). The sequence is that of Tetraacyldisaccharide 4'-kinase from Azoarcus sp. (strain BH72).